We begin with the raw amino-acid sequence, 554 residues long: Methyl-CpG-binding domain protein 4 (554 aa).

Residues 1 to 23 are disordered; the sequence is MESPNLGDNRVRGESLVPDPPWD. The MBD domain maps to 63 to 135; sequence STTATEGHKP…EDFNFTVLPK (73 aa). Over residues 154–164 the composition is skewed to polar residues; sequence QPNETDVSKQN. Disordered regions lie at residues 154 to 195 and 209 to 252; these read QPNE…SNSN and DVDS…RKRA. Over residues 178-195 the composition is skewed to low complexity; sequence LPSGTSESPESSGLSNSN. Residues serine 296 and serine 402 each carry the phosphoserine modification. Aspartate 534 is an active-site residue.

Interacts with MLH1.

Its subcellular location is the nucleus. Mismatch-specific DNA N-glycosylase involved in DNA repair. Has thymine glycosylase activity and is specific for G:T mismatches within methylated and unmethylated CpG sites. Can also remove uracil or 5-fluorouracil in G:U mismatches. Has no lyase activity. Was first identified as methyl-CpG-binding protein. The chain is Methyl-CpG-binding domain protein 4 (Mbd4) from Mus musculus (Mouse).